Consider the following 119-residue polypeptide: uncharacterized protein (119 aa).

The next 2 helical transmembrane spans lie at 53-73 (AATI…SFLA) and 92-112 (FITH…WFLF).

The protein localises to the membrane. This is an uncharacterized protein from Saccharomyces cerevisiae (strain ATCC 204508 / S288c) (Baker's yeast).